A 284-amino-acid polypeptide reads, in one-letter code: Tropomyosin (284 aa).

Residues 1–284 (MEAIKNKMQA…DQTFAELTGY (284 aa)) adopt a coiled-coil conformation.

The protein belongs to the tropomyosin family. As to quaternary structure, homodimer.

Tropomyosin, in association with the troponin complex, plays a central role in the calcium dependent regulation of muscle contraction. This is Tropomyosin from Dermatophagoides pteronyssinus (European house dust mite).